The following is a 2197-amino-acid chain: Protein sickie (2197 aa).

Residues Arg21–Gln129 form the Calponin-homology (CH) domain. Disordered regions lie at residues Gly165–Gln197, Cys235–His311, Ala331–His646, Gly730–Lys767, Arg788–Val910, Gly1094–Asn1119, and Thr1202–Gly1223. Positions Gln175 to Gln197 are enriched in low complexity. Residues Ser261 to Arg290 show a composition bias toward polar residues. Residues Pro291 to Pro304 are compositionally biased toward low complexity. Polar residues predominate over residues Ala331–Gln341. 2 stretches are compositionally biased toward low complexity: residues Ser342–Ala354 and Ser379–Gln398. A compositionally biased stretch (basic and acidic residues) spans Gln399–Asn428. 4 stretches are compositionally biased toward polar residues: residues Glu429–Ser441, Ala561–Ser570, Glu577–Tyr588, and Ser633–Lys644. Low complexity-rich tracts occupy residues Gly755–Gly766, Ser796–Asn831, and Ser887–Pro904. The segment covering Gly1100–Asn1119 has biased composition (polar residues). The stretch at Tyr1262 to Gln1342 forms a coiled coil. Disordered regions lie at residues Gln1373–Ser1415 and Lys1455–Lys1511. Polar residues-rich tracts occupy residues Gly1379–Ser1399 and Arg1406–Ser1415. Positions Lys1455–His1468 are enriched in basic residues. A coiled-coil region spans residues Ser1556 to Thr1591. 3 disordered regions span residues Ser1600 to Glu1633, Cys1648 to Pro1690, and Ser2172 to Glu2197. A compositionally biased stretch (polar residues) spans Gln1603–Glu1616. The span at Pro1650–Pro1663 shows a compositional bias: pro residues. The segment covering Leu2184 to Glu2197 has biased composition (polar residues).

It belongs to the Nav/unc-53 family.

In terms of biological role, required for the immune deficiency pathway, which mediates responses to Gram-negative bacterial infection. Favors Rel activation and nuclear translocation. This is Protein sickie (sick) from Drosophila melanogaster (Fruit fly).